Here is a 302-residue protein sequence, read N- to C-terminus: tRNA dimethylallyltransferase (302 aa).

Position 9 to 16 (9 to 16 (GPTAAGKS)) interacts with ATP. Residue 11–16 (TAAGKS) participates in substrate binding. Residues 34-37 (DSRQ) are interaction with substrate tRNA.

The protein belongs to the IPP transferase family. Monomer. Mg(2+) serves as cofactor.

The catalysed reaction is adenosine(37) in tRNA + dimethylallyl diphosphate = N(6)-dimethylallyladenosine(37) in tRNA + diphosphate. Functionally, catalyzes the transfer of a dimethylallyl group onto the adenine at position 37 in tRNAs that read codons beginning with uridine, leading to the formation of N6-(dimethylallyl)adenosine (i(6)A). This Gloeobacter violaceus (strain ATCC 29082 / PCC 7421) protein is tRNA dimethylallyltransferase.